A 620-amino-acid polypeptide reads, in one-letter code: Putative ribonuclease H protein At1g65750 (620 aa).

The region spanning 456-586 is the RNase H type-1 domain; the sequence is CVGWVKVNTD…ADGLANYAFS (131 aa). Mg(2+) is bound by residues D465, E505, D529, and D578.

The cofactor is Mg(2+).

It catalyses the reaction Endonucleolytic cleavage to 5'-phosphomonoester.. This chain is Putative ribonuclease H protein At1g65750, found in Arabidopsis thaliana (Mouse-ear cress).